A 258-amino-acid chain; its full sequence is Deoxyribose-phosphate aldolase (258 aa).

The Proton donor/acceptor role is filled by D102. The Schiff-base intermediate with acetaldehyde role is filled by K165. K199 functions as the Proton donor/acceptor in the catalytic mechanism.

It belongs to the DeoC/FbaB aldolase family. DeoC type 2 subfamily.

The protein resides in the cytoplasm. It catalyses the reaction 2-deoxy-D-ribose 5-phosphate = D-glyceraldehyde 3-phosphate + acetaldehyde. It functions in the pathway carbohydrate degradation; 2-deoxy-D-ribose 1-phosphate degradation; D-glyceraldehyde 3-phosphate and acetaldehyde from 2-deoxy-alpha-D-ribose 1-phosphate: step 2/2. In terms of biological role, catalyzes a reversible aldol reaction between acetaldehyde and D-glyceraldehyde 3-phosphate to generate 2-deoxy-D-ribose 5-phosphate. This Aliivibrio fischeri (strain ATCC 700601 / ES114) (Vibrio fischeri) protein is Deoxyribose-phosphate aldolase.